A 145-amino-acid chain; its full sequence is MRQTFMANESNIERKWYVIDAEGQTLGRLSSEVAAILRGKNKVTYTPHVDTGDYVIIINASKIEFTGNKEQDKMYHRHSNHPGGLKSISAGELKRTNPERLLETSIKGMLPSTRLGEKQGKKLFVYGGAEHPHAAQQPENYELRG.

The interval 72–91 (DKMYHRHSNHPGGLKSISAG) is disordered.

This sequence belongs to the universal ribosomal protein uL13 family. As to quaternary structure, part of the 50S ribosomal subunit.

Its function is as follows. This protein is one of the early assembly proteins of the 50S ribosomal subunit, although it is not seen to bind rRNA by itself. It is important during the early stages of 50S assembly. The polypeptide is Large ribosomal subunit protein uL13 (Staphylococcus epidermidis (strain ATCC 12228 / FDA PCI 1200)).